Here is a 204-residue protein sequence, read N- to C-terminus: LexA repressor (204 aa).

The H-T-H motif DNA-binding region spans 28-48 (RAEIAQELGFKSPNAAEEHLK). Active-site for autocatalytic cleavage activity residues include S125 and K162.

Belongs to the peptidase S24 family. In terms of assembly, homodimer.

The enzyme catalyses Hydrolysis of Ala-|-Gly bond in repressor LexA.. Its function is as follows. Represses a number of genes involved in the response to DNA damage (SOS response), including recA and lexA. In the presence of single-stranded DNA, RecA interacts with LexA causing an autocatalytic cleavage which disrupts the DNA-binding part of LexA, leading to derepression of the SOS regulon and eventually DNA repair. This is LexA repressor from Pseudomonas aeruginosa (strain LESB58).